A 411-amino-acid polypeptide reads, in one-letter code: Na(+)-translocating NADH-quinone reductase subunit F (411 aa).

Residues Ala-6–Ala-26 traverse the membrane as a helical segment. The 2Fe-2S ferredoxin-type domain occupies Gly-35–Phe-129. [2Fe-2S] cluster-binding residues include Cys-72, Cys-78, Cys-81, and Cys-113. The FAD-binding FR-type domain occupies Val-132–Lys-273.

It belongs to the NqrF family. Composed of six subunits; NqrA, NqrB, NqrC, NqrD, NqrE and NqrF. [2Fe-2S] cluster serves as cofactor. FAD is required as a cofactor.

The protein localises to the cell inner membrane. The enzyme catalyses a ubiquinone + n Na(+)(in) + NADH + H(+) = a ubiquinol + n Na(+)(out) + NAD(+). Its function is as follows. NQR complex catalyzes the reduction of ubiquinone-1 to ubiquinol by two successive reactions, coupled with the transport of Na(+) ions from the cytoplasm to the periplasm. The first step is catalyzed by NqrF, which accepts electrons from NADH and reduces ubiquinone-1 to ubisemiquinone by a one-electron transfer pathway. This chain is Na(+)-translocating NADH-quinone reductase subunit F, found in Psychrobacter cryohalolentis (strain ATCC BAA-1226 / DSM 17306 / VKM B-2378 / K5).